A 313-amino-acid polypeptide reads, in one-letter code: MGNELQHRTVLLDEAVESLVTRPDGIYVDGTFGRGGHSRAVLARLAEGGRLIAFDKDPRAIETAQRIEDARFSIVHDSFASMRDALAARGIEKVSGVLLDLGVSSPQVDDPARGFSFRADGPLDMRMDPTRGESAAEWLARASVQELTEVIRDYGEERFAFQIAKALVARRAESDRLGPLDTTGELAQIVGHVVKTREKGKDPATRTFQAIRIHVNQELADLQVVLDAALSLLEQGGRLVVISFHSLEDRIVKRFMQAHASAPAVDRRLPIRAVDLPSPPLKIISRQFPSEAEVVANPRARSAVMRIAERVTP.

Residues 35–37 (GGH), aspartate 55, phenylalanine 79, aspartate 100, and glutamine 107 contribute to the S-adenosyl-L-methionine site.

The protein belongs to the methyltransferase superfamily. RsmH family.

It is found in the cytoplasm. The catalysed reaction is cytidine(1402) in 16S rRNA + S-adenosyl-L-methionine = N(4)-methylcytidine(1402) in 16S rRNA + S-adenosyl-L-homocysteine + H(+). Specifically methylates the N4 position of cytidine in position 1402 (C1402) of 16S rRNA. In Burkholderia ambifaria (strain ATCC BAA-244 / DSM 16087 / CCUG 44356 / LMG 19182 / AMMD) (Burkholderia cepacia (strain AMMD)), this protein is Ribosomal RNA small subunit methyltransferase H.